The following is a 357-amino-acid chain: Putative diaminopimelate epimerase, chloroplastic (357 aa).

Residues 1-47 (MSSATAAATATIAAAAAAAAKLAATPAPAPSRRRLTLRGNPTARRCV) constitute a chloroplast transit peptide. Residues Cys-145 and Cys-300 contribute to the active site.

It belongs to the diaminopimelate epimerase family.

It localises to the plastid. The protein resides in the chloroplast. The catalysed reaction is (2S,6S)-2,6-diaminopimelate = meso-2,6-diaminopimelate. It functions in the pathway amino-acid biosynthesis; L-lysine biosynthesis via DAP pathway; DL-2,6-diaminopimelate from LL-2,6-diaminopimelate: step 1/1. In Oryza sativa subsp. indica (Rice), this protein is Putative diaminopimelate epimerase, chloroplastic (DAPF).